A 1325-amino-acid chain; its full sequence is Lysine-specific demethylase 3A (1325 aa).

Disordered stretches follow at residues 249 to 284 (SKRI…QGHV), 300 to 333 (PANK…RRSV), and 372 to 399 (QNGK…TGLK). Polar residues predominate over residues 274-283 (SPEVSQSQGH). Low complexity predominate over residues 378 to 390 (SLISSRSSSLSDS). Residues 669-694 (CDVCDTTIFNLRWVCSKCGFGVCVDC) form a C6-type zinc finger. Disordered regions lie at residues 772–791 (TLKE…SLQQ) and 798–819 (PQLP…TASV). Residues 888–892 (LRNLL) carry the LXXLL motif motif. The 224-residue stretch at 1062–1285 (MPSRFDDLMK…HCFWLTQEFR (224 aa)) folds into the JmjC domain. Fe cation-binding residues include histidine 1124, aspartate 1126, and histidine 1253.

Belongs to the JHDM2 histone demethylase family. It depends on Fe(2+) as a cofactor.

The protein resides in the cytoplasm. The protein localises to the nucleus. It catalyses the reaction N(6),N(6)-dimethyl-L-lysyl(9)-[histone H3] + 2 2-oxoglutarate + 2 O2 = L-lysyl(9)-[histone H3] + 2 formaldehyde + 2 succinate + 2 CO2. Histone demethylase that specifically demethylates 'Lys-9' of histone H3, thereby playing a central role in histone code. Preferentially demethylates mono- and dimethylated H3 'Lys-9' residue, with a preference for dimethylated residue, while it has weak or no activity on trimethylated H3 'Lys-9'. Demethylation of Lys residue generates formaldehyde and succinate. In Gallus gallus (Chicken), this protein is Lysine-specific demethylase 3A (KDM3A).